The sequence spans 445 residues: 6-phosphogluconate dehydrogenase, decarboxylating (445 aa).

Residues 1–4 (AVMG), 22–24 (NRS), 63–65 (VKA), and Asn91 contribute to the NADP(+) site. Substrate is bound by residues Asn91 and 117-119 (SGG). Lys172 functions as the Proton acceptor in the catalytic mechanism. 175–176 (HN) lines the substrate pocket. Glu179 functions as the Proton donor in the catalytic mechanism. Residues Tyr180, Lys249, Arg276, Arg434, and His440 each contribute to the substrate site.

It belongs to the 6-phosphogluconate dehydrogenase family. In terms of assembly, homodimer.

The catalysed reaction is 6-phospho-D-gluconate + NADP(+) = D-ribulose 5-phosphate + CO2 + NADPH. It functions in the pathway carbohydrate degradation; pentose phosphate pathway; D-ribulose 5-phosphate from D-glucose 6-phosphate (oxidative stage): step 3/3. Its function is as follows. Catalyzes the oxidative decarboxylation of 6-phosphogluconate to ribulose 5-phosphate and CO(2), with concomitant reduction of NADP to NADPH. This chain is 6-phosphogluconate dehydrogenase, decarboxylating (gnd), found in Citrobacter amalonaticus.